Consider the following 146-residue polypeptide: MTTTTPQRIGGWLLGPLAWLLVALLSTTLALLLYTAALSSPQTFQTLGGQALTTQILWGVSFITAIALWYYTLWLTIAFFKRRRCVPKHYIIWLLISVLLAVKAFAFSPVEDGIAVRQLLFTLLATALIVPYFKRSSRVKATFVNP.

The Cytoplasmic portion of the chain corresponds to 1-12 (MTTTTPQRIGGW). Residues 13–33 (LLGPLAWLLVALLSTTLALLL) form a helical membrane-spanning segment. The Periplasmic segment spans residues 34–59 (YTAALSSPQTFQTLGGQALTTQILWG). The helical transmembrane segment at 60 to 80 (VSFITAIALWYYTLWLTIAFF) threads the bilayer. The Cytoplasmic portion of the chain corresponds to 81–89 (KRRRCVPKH). The chain crosses the membrane as a helical span at residues 90-110 (YIIWLLISVLLAVKAFAFSPV). The Periplasmic segment spans residues 111 to 112 (ED). Residues 113–133 (GIAVRQLLFTLLATALIVPYF) traverse the membrane as a helical segment. Residues 134–146 (KRSSRVKATFVNP) lie on the Cytoplasmic side of the membrane.

This sequence to Synechocystis PCC 6803 sll0481.

The protein resides in the cell inner membrane. The protein is Inner membrane protein YdgK (ydgK) of Escherichia coli (strain K12).